The following is a 346-amino-acid chain: Sensor protein kinase GraS (346 aa).

2 helical membrane passes run 15–35 and 43–63; these read MNWIFWILFLNLLMLGISLID and LFYIVSLNLSLTMIFLILTYF. The region spanning 126–332 is the Histidine kinase domain; it reads EFVHDIKTPV…TVRLIFPLQN (207 aa).

As to quaternary structure, interacts with GraX.

Its subcellular location is the cell membrane. It carries out the reaction ATP + protein L-histidine = ADP + protein N-phospho-L-histidine.. Its function is as follows. Member of the two-component regulatory system GraR/GraS involved in resistance against cationic antimicrobial peptides (CAMPs). Functions as a sensor protein kinase which phosphorylates GraR through the auxiliary protein GraX. In turn, GraR up-regulates many genes such as adhesins, exoproteins, transporters, toxins, and proteins involved in cell wall synthesis. Down-regulates the expression of many genes involved in RNA and amino acid synthesis or glycolysis. In Staphylococcus aureus (strain MSSA476), this protein is Sensor protein kinase GraS (graS).